The primary structure comprises 273 residues: 6-carboxyhexanoate--CoA ligase (273 aa).

Belongs to the BioW family. In terms of assembly, homodimer. Mg(2+) is required as a cofactor.

The catalysed reaction is heptanedioate + ATP + CoA = 6-carboxyhexanoyl-CoA + AMP + diphosphate. The protein operates within metabolic intermediate metabolism; pimeloyl-CoA biosynthesis; pimeloyl-CoA from pimelate: step 1/1. Its function is as follows. Catalyzes the transformation of pimelate into pimeloyl-CoA with concomitant hydrolysis of ATP to AMP. This chain is 6-carboxyhexanoate--CoA ligase, found in Alkalihalophilus pseudofirmus (strain ATCC BAA-2126 / JCM 17055 / OF4) (Bacillus pseudofirmus).